The primary structure comprises 354 residues: MGPVSVLPKPQSISTWEGDLAKMTHLQAGLSPDTIEKARLELNENPDVLHQDIQQVRDMIITRPDIGFLRTDDAFILRFLRARKFHQADAFRLLAQYFQYRQLNLDMFKNFKADDPGIKRALIDGFPGVLENRDHYGRKILLLFAANWDQSRNSFTDILRAILLSLEVLIEDPELQINGFILIIDWSNFSFKQASKLTPSILKLAIEGLQDSFPARFGGVHFVNQPWYIHALYTLIKPFLKDKTRKRIFLHGNNLNSLHQLIHPEFLPSEFGGTLPPYDMGTWARTLLGPDYSDENDYTHTSYNAMYVKHTCSNLERECSPKPMKRSQSVVEAGTLKHEEKGENENTQPLLALD.

The CRAL-TRIO domain maps to 118–279 (IKRALIDGFP…EFGGTLPPYD (162 aa)). Positions 317–354 (RECSPKPMKRSQSVVEAGTLKHEEKGENENTQPLLALD) are disordered. Basic and acidic residues predominate over residues 335 to 344 (TLKHEEKGEN). A compositionally biased stretch (polar residues) spans 345–354 (ENTQPLLALD).

As to quaternary structure, forms a complex with clathrin heavy chain and gamma-adaptin. In terms of tissue distribution, expressed in brain with no expression detected in non-neuronal tissues (at protein level).

It is found in the golgi apparatus. Its subcellular location is the trans-Golgi network membrane. It localises to the early endosome membrane. The protein resides in the cytoplasmic vesicle. The protein localises to the clathrin-coated vesicle. Its function is as follows. Required for normal morphology of late endosomes and/or lysosomes in neurons. Binds phosphatidylinositol 3,5-bisphosphate (PtdIns(3,5)P2). This Rattus norvegicus (Rat) protein is Clavesin-1.